The following is a 241-amino-acid chain: MHATEPNTGHGSQRAIRLAPSILSADFARLGEEVCAIEAGGADLVHFDVMDNHYVSNLTIGPLVCEAIRPLVSIPIDVHLMVEPVDALIPMFAKAGANLISFHPEASRHVDRTIGLIRDHGCKAGLVLNPATPLSWLDHTLDKLDLVLLMSVNPGFGGQAFIPGVLDKVRQARARIDRQVAAGGRPVWLEIDGGVKADNITEIARAGADTFVAGSAVFGAPDADGGYRGILHRLREAATIT.

Position 21 (S21) interacts with substrate. The a divalent metal cation site is built by H46, D48, and H79. Residue D48 is the Proton acceptor of the active site. Residues H79, G155 to G158, D192 to G194, and G214 to S215 each bind substrate. D192 is an a divalent metal cation binding site. D192 (proton donor) is an active-site residue.

The protein belongs to the ribulose-phosphate 3-epimerase family. A divalent metal cation serves as cofactor.

It carries out the reaction D-ribulose 5-phosphate = D-xylulose 5-phosphate. The protein operates within carbohydrate degradation. Its function is as follows. Catalyzes the reversible epimerization of D-ribulose 5-phosphate to D-xylulose 5-phosphate. This Cupriavidus necator (strain ATCC 17699 / DSM 428 / KCTC 22496 / NCIMB 10442 / H16 / Stanier 337) (Ralstonia eutropha) protein is Ribulose-phosphate 3-epimerase 2.